The chain runs to 326 residues: Protein farnesyltransferase/geranylgeranyltransferase type-1 subunit alpha (326 aa).

5 PFTA repeats span residues R55–H89, D90–P124, V126–G160, W161–L194, and M201–E235.

This sequence belongs to the protein prenyltransferase subunit alpha family. In terms of assembly, heterodimer of an alpha and a beta subunit. Requires Mg(2+) as cofactor.

It carries out the reaction L-cysteinyl-[protein] + (2E,6E)-farnesyl diphosphate = S-(2E,6E)-farnesyl-L-cysteinyl-[protein] + diphosphate. The enzyme catalyses geranylgeranyl diphosphate + L-cysteinyl-[protein] = S-geranylgeranyl-L-cysteinyl-[protein] + diphosphate. Its function is as follows. Essential subunit of both the farnesyltransferase and the geranylgeranyltransferase complex. Contributes to the transfer of a farnesyl or geranylgeranyl moiety from farnesyl or geranylgeranyl diphosphate to a cysteine at the fourth position from the C-terminus of several proteins having the C-terminal sequence Cys-aliphatic-aliphatic-X. In Arabidopsis thaliana (Mouse-ear cress), this protein is Protein farnesyltransferase/geranylgeranyltransferase type-1 subunit alpha (FTA).